A 421-amino-acid chain; its full sequence is Zinc chaperone AztD (421 aa).

The signal sequence occupies residues 1 to 29 (MMENIMKKRLLSTSISTLLLGLSVMPAFA). Positions 101, 104, 106, 126, 169, 216, and 405 each coordinate Zn(2+). A disulfide bond links Cys212 and Cys229. The disordered stretch occupies residues 399–421 (GGSGKVHGEHHDHEAHHHDDHAH). A compositionally biased stretch (basic and acidic residues) spans 404–421 (VHGEHHDHEAHHHDDHAH). Residues 408–419 (HHDHEAHHHDDH) carry the N-terminal Zn(2+)-binding motif; binds a third Zn(2+) with low affinity motif.

In terms of assembly, monomer.

The protein resides in the periplasm. Acts as a zinc chaperone in the AztABCD zinc transport system. Directly transfers one zinc cation to the solute binding protein AztC; the transfer occurs without the formation of a stable interaction. Binds 3 Zn(2+), two with high affinity and one with low affinity, and transfers only Zn(2+) bound to site 2 to AztC. This is Zinc chaperone AztD from Citrobacter koseri (strain ATCC BAA-895 / CDC 4225-83 / SGSC4696).